Consider the following 521-residue polypeptide: Probable glycogen synthase (521 aa).

This sequence belongs to the glycosyltransferase 1 family. Bacterial/plant glycogen synthase subfamily.

It carries out the reaction [(1-&gt;4)-alpha-D-glucosyl](n) + ADP-alpha-D-glucose = [(1-&gt;4)-alpha-D-glucosyl](n+1) + ADP + H(+). It functions in the pathway glycan biosynthesis; glycogen biosynthesis. Synthesizes alpha-1,4-glucan chains using ADP-glucose. The protein is Probable glycogen synthase (glgA) of Methanocaldococcus jannaschii (strain ATCC 43067 / DSM 2661 / JAL-1 / JCM 10045 / NBRC 100440) (Methanococcus jannaschii).